A 404-amino-acid chain; its full sequence is Cysteine desulfurase IscS (404 aa).

Residues 75–76 (AT), N155, Q183, and 203–205 (SAH) contribute to the pyridoxal 5'-phosphate site. N6-(pyridoxal phosphate)lysine is present on K206. Residue T243 participates in pyridoxal 5'-phosphate binding. Catalysis depends on C328, which acts as the Cysteine persulfide intermediate. C328 is a [2Fe-2S] cluster binding site.

This sequence belongs to the class-V pyridoxal-phosphate-dependent aminotransferase family. NifS/IscS subfamily. As to quaternary structure, homodimer. Forms a heterotetramer with IscU, interacts with other sulfur acceptors. It depends on pyridoxal 5'-phosphate as a cofactor.

It is found in the cytoplasm. It carries out the reaction (sulfur carrier)-H + L-cysteine = (sulfur carrier)-SH + L-alanine. It participates in cofactor biosynthesis; iron-sulfur cluster biosynthesis. Master enzyme that delivers sulfur to a number of partners involved in Fe-S cluster assembly, tRNA modification or cofactor biosynthesis. Catalyzes the removal of elemental sulfur atoms from cysteine to produce alanine. Functions as a sulfur delivery protein for Fe-S cluster synthesis onto IscU, an Fe-S scaffold assembly protein, as well as other S acceptor proteins. The polypeptide is Cysteine desulfurase IscS (Pseudomonas putida (strain GB-1)).